Here is a 367-residue protein sequence, read N- to C-terminus: Palmitoyltransferase ZDHHC2 (367 aa).

Topologically, residues 1-16 (MAPSGPGSSARRRCRR) are cytoplasmic. Residues 17–37 (VLYWIPVVFITLLLGWSYYAY) traverse the membrane as a helical segment. The Lumenal portion of the chain corresponds to 38–54 (AIQLCIVSMENTGEQVV). Residues 55-75 (CLMAYHLLFAMFVWSYWKTIF) form a helical membrane-spanning segment. Over 76–170 (TLPMNPSKEF…NNCVGFSNYK (95 aa)) the chain is Cytoplasmic. The DHHC domain maps to 127–177 (RYCDRCQLIKPDRCHHCSVCDKCILKMDHHCPWVNNCVGFSNYKFFLLFLA). The active-site S-palmitoyl cysteine intermediate is Cys157. The helical transmembrane segment at 171-191 (FFLLFLAYSLLYCLFIAATDL) threads the bilayer. At 192 to 208 (QYFIKFWTNGLPDTQAK) the chain is on the lumenal side. Residues 209 to 229 (FHIMFLFFAAAMFSVSLSSLF) traverse the membrane as a helical segment. Residues 230–367 (GYHCWLVSKN…NPALTMENET (138 aa)) are Cytoplasmic-facing. Residues 299–367 (NQDPEQASTP…NPALTMENET (69 aa)) are mediates localization to plasma membrane and recycling endosomes. The segment at 330–367 (ESQSHLLTDSQSWTESSINPGKCKAGMSNPALTMENET) is disordered. A compositionally biased stretch (polar residues) spans 333–348 (SHLLTDSQSWTESSIN). The short motif at 335-336 (LL) is the Non-canonical dileucine endocytic signal element. Ser341 is modified (phosphoserine). An NPxY-like endocytic signal motif is present at residues 358 to 361 (NPAL).

The protein belongs to the DHHC palmitoyltransferase family. In terms of assembly, monomer. Homodimer. The monomeric form has a higher catalytic activity. Autopalmitoylated. As to expression, ubiquitously expressed. Reduced expression in colorectal cancers with liver metastasis.

Its subcellular location is the postsynaptic density. It is found in the postsynaptic recycling endosome membrane. It localises to the cell membrane. The protein localises to the endoplasmic reticulum membrane. The protein resides in the golgi apparatus membrane. The enzyme catalyses L-cysteinyl-[protein] + hexadecanoyl-CoA = S-hexadecanoyl-L-cysteinyl-[protein] + CoA. It carries out the reaction L-cysteinyl-[protein] + tetradecanoyl-CoA = S-tetradecanoyl-L-cysteinyl-[protein] + CoA. It catalyses the reaction L-cysteinyl-[protein] + octadecanoyl-CoA = S-octadecanoyl-L-cysteinyl-[protein] + CoA. In terms of biological role, palmitoyltransferase that catalyzes the addition of palmitate onto various protein substrates and is involved in a variety of cellular processes. Has no stringent fatty acid selectivity and in addition to palmitate can also transfer onto target proteins myristate from tetradecanoyl-CoA and stearate from octadecanoyl-CoA. In the nervous system, plays a role in long term synaptic potentiation by palmitoylating AKAP5 through which it regulates protein trafficking from the dendritic recycling endosomes to the plasma membrane and controls both structural and functional plasticity at excitatory synapses. In dendrites, mediates the palmitoylation of DLG4 when synaptic activity decreases and induces synaptic clustering of DLG4 and associated AMPA-type glutamate receptors. Also mediates the de novo and turnover palmitoylation of RGS7BP, a shuttle for Gi/o-specific GTPase-activating proteins/GAPs, promoting its localization to the plasma membrane in response to the activation of G protein-coupled receptors. Through the localization of these GTPase-activating proteins/GAPs, it also probably plays a role in G protein-coupled receptors signaling in neurons. Also probably plays a role in cell adhesion by palmitoylating CD9 and CD151 to regulate their expression and function. Palmitoylates the endoplasmic reticulum protein CKAP4 and regulates its localization to the plasma membrane. Could also palmitoylate LCK and regulate its localization to the plasma membrane. Functionally, (Microbial infection) Promotes Chikungunya virus (CHIKV) replication by mediating viral nsp1 palmitoylation. In Homo sapiens (Human), this protein is Palmitoyltransferase ZDHHC2.